A 167-amino-acid chain; its full sequence is SsrA-binding protein (167 aa).

The tract at residues 139–167 (QAHDKRHAEKEREWQRDKQRIMRAHNRNA) is disordered. The span at 144–158 (RHAEKEREWQRDKQR) shows a compositional bias: basic and acidic residues.

It belongs to the SmpB family.

The protein localises to the cytoplasm. In terms of biological role, required for rescue of stalled ribosomes mediated by trans-translation. Binds to transfer-messenger RNA (tmRNA), required for stable association of tmRNA with ribosomes. tmRNA and SmpB together mimic tRNA shape, replacing the anticodon stem-loop with SmpB. tmRNA is encoded by the ssrA gene; the 2 termini fold to resemble tRNA(Ala) and it encodes a 'tag peptide', a short internal open reading frame. During trans-translation Ala-aminoacylated tmRNA acts like a tRNA, entering the A-site of stalled ribosomes, displacing the stalled mRNA. The ribosome then switches to translate the ORF on the tmRNA; the nascent peptide is terminated with the 'tag peptide' encoded by the tmRNA and targeted for degradation. The ribosome is freed to recommence translation, which seems to be the essential function of trans-translation. This is SsrA-binding protein from Xylella fastidiosa (strain M23).